Consider the following 283-residue polypeptide: Pantothenate synthetase (283 aa).

Residue 34 to 41 (MGALHDGH) coordinates ATP. The active-site Proton donor is His41. Gln65 is a binding site for (R)-pantoate. Gln65 is a beta-alanine binding site. Residue 152–155 (GEKD) coordinates ATP. Gln158 is a binding site for (R)-pantoate. Residues Val181 and 189-192 (MSSR) contribute to the ATP site.

The protein belongs to the pantothenate synthetase family. Homodimer.

Its subcellular location is the cytoplasm. It catalyses the reaction (R)-pantoate + beta-alanine + ATP = (R)-pantothenate + AMP + diphosphate + H(+). Its pathway is cofactor biosynthesis; (R)-pantothenate biosynthesis; (R)-pantothenate from (R)-pantoate and beta-alanine: step 1/1. Its function is as follows. Catalyzes the condensation of pantoate with beta-alanine in an ATP-dependent reaction via a pantoyl-adenylate intermediate. This chain is Pantothenate synthetase, found in Bradyrhizobium sp. (strain BTAi1 / ATCC BAA-1182).